A 278-amino-acid polypeptide reads, in one-letter code: 4-deoxy-L-threo-5-hexosulose-uronate ketol-isomerase (278 aa).

Zn(2+)-binding residues include histidine 196, histidine 198, glutamate 203, and histidine 245.

This sequence belongs to the KduI family. The cofactor is Zn(2+).

The enzyme catalyses 5-dehydro-4-deoxy-D-glucuronate = 3-deoxy-D-glycero-2,5-hexodiulosonate. Its pathway is glycan metabolism; pectin degradation; 2-dehydro-3-deoxy-D-gluconate from pectin: step 4/5. Its function is as follows. Catalyzes the isomerization of 5-dehydro-4-deoxy-D-glucuronate to 3-deoxy-D-glycero-2,5-hexodiulosonate. The chain is 4-deoxy-L-threo-5-hexosulose-uronate ketol-isomerase from Yersinia enterocolitica serotype O:8 / biotype 1B (strain NCTC 13174 / 8081).